Reading from the N-terminus, the 315-residue chain is Serine/threonine-protein phosphatase PP2A catalytic subunit 2 (315 aa).

D62, H64, D90, and N122 together coordinate Mn(2+). The active-site Proton donor is the H123. Residues H172 and H247 each contribute to the Mn(2+) site. A disordered region spans residues 294-315 (QFEPAPRENEPHTTRRVPDYFL). Residues 298-315 (APRENEPHTTRRVPDYFL) are compositionally biased toward basic and acidic residues. L315 bears the Leucine methyl ester mark.

This sequence belongs to the PPP phosphatase family. PP-2A subfamily. Mn(2+) serves as cofactor. Post-translationally, reversibly methyl esterified on Leu-315 by leucine carboxyl methyltransferase 1 (PPM1) and protein phosphatase methylesterase 1 (PPE1). Carboxyl methylation influences the affinity of the catalytic subunit for the different regulatory subunits, thereby modulating the PP2A holoenzyme's substrate specificity, enzyme activity and cellular localization.

The catalysed reaction is O-phospho-L-seryl-[protein] + H2O = L-seryl-[protein] + phosphate. The enzyme catalyses O-phospho-L-threonyl-[protein] + H2O = L-threonyl-[protein] + phosphate. The protein is Serine/threonine-protein phosphatase PP2A catalytic subunit 2 (Ppn2) of Paramecium tetraurelia.